Reading from the N-terminus, the 776-residue chain is Endonuclease MutS2 (776 aa).

Residue glycine 328–threonine 335 coordinates ATP. Positions leucine 701–lysine 776 constitute a Smr domain.

Belongs to the DNA mismatch repair MutS family. MutS2 subfamily. Homodimer. Binds to stalled ribosomes, contacting rRNA.

In terms of biological role, endonuclease that is involved in the suppression of homologous recombination and thus may have a key role in the control of bacterial genetic diversity. Acts as a ribosome collision sensor, splitting the ribosome into its 2 subunits. Detects stalled/collided 70S ribosomes which it binds and splits by an ATP-hydrolysis driven conformational change. Acts upstream of the ribosome quality control system (RQC), a ribosome-associated complex that mediates the extraction of incompletely synthesized nascent chains from stalled ribosomes and their subsequent degradation. Probably generates substrates for RQC. The sequence is that of Endonuclease MutS2 from Streptococcus mutans serotype c (strain ATCC 700610 / UA159).